The chain runs to 353 residues: Peroxisome assembly protein 12-A (353 aa).

The Peroxisomal matrix portion of the chain corresponds to 1–19 (MAERGAHITTTSASDDRPS). A helical transmembrane segment spans residues 20–47 (IFEVVAQESLMAAARPALHHIVKVLAES). Topologically, residues 48–51 (NPSR) are cytoplasmic. A helical transmembrane segment spans residues 52–76 (YGTLWRWFDELYTLLDWLLQQHYLS). Residues 77–104 (WASASFSENFYGLKRITLGKEVGQRNLP) are Peroxisomal matrix-facing. A helical transmembrane segment spans residues 105-134 (RKEYWKSLLLLVLIPYLRVKLEKIVNRLRE). The Cytoplasmic portion of the chain corresponds to 135–139 (EQDYS). The helical transmembrane segment at 140–178 (IQNPTSFHKRCYKAILASYPFVKLGWEAWFLFYQLRYIL) threads the bilayer. Residues 179-243 (WNGKNHSPLL…LGAVALSVSS (65 aa)) lie on the Peroxisomal matrix side of the membrane. Residues 244 to 271 (SLSLGVFFLQFLDWWYSAENQETLKSLN) form a helical membrane-spanning segment. Topologically, residues 272–353 (NLPVPPPPIH…HLIKLYTPDG (82 aa)) are cytoplasmic. Residues Cys-298, Cys-301, Cys-319, and Cys-322 each coordinate Zn(2+). Residues 298 to 337 (CPLCRKVRVNDTALGTSGYVFCYRCAYYYVKTHQRCPVSG) form an RING-type; degenerate zinc finger.

The protein belongs to the pex2/pex10/pex12 family. In terms of assembly, component of the PEX2-PEX10-PEX12 retrotranslocation channel.

It localises to the peroxisome membrane. It functions in the pathway protein modification; protein ubiquitination. Its function is as follows. Component of a retrotranslocation channel required for peroxisome organization by mediating export of the PEX5 receptor from peroxisomes to the cytosol, thereby promoting PEX5 recycling. The retrotranslocation channel is composed of PEX2, PEX10 and PEX12; each subunit contributing transmembrane segments that coassemble into an open channel that specifically allows the passage of PEX5 through the peroxisomal membrane. PEX12 also regulates PEX5 recycling by activating the E3 ubiquitin-protein ligase activity of PEX10. When PEX5 recycling is compromised, PEX12 stimulates PEX10-mediated polyubiquitination of PEX5, leading to its subsequent degradation. This is Peroxisome assembly protein 12-A from Xenopus laevis (African clawed frog).